A 421-amino-acid polypeptide reads, in one-letter code: Protein PHLOEM UNLOADING MODULATOR (421 aa).

7 consecutive transmembrane segments (helical) span residues Leu-30 to Lys-50, Ile-60 to Val-80, His-124 to Phe-144, Tyr-158 to Leu-178, Ala-286 to Ala-306, Cys-323 to Ala-343, and Thr-397 to Leu-417.

The protein belongs to the sphingomyelin synthase family.

The protein localises to the membrane. It participates in sphingolipid metabolism. Catalyzes the biosynthesis of sphingolipids with very long-chain fatty acid (VLCFA). Required for the formation of plasmodesmal cytoplasmic sleeve during the transition from type I to type II plasmodesmata to modulate post-sieve elements (SE) unloading and symplastic cell-to-cell molecular trafficking at the phloem pole pericycle (PPP)-endodermis interface in roots. The sequence is that of Protein PHLOEM UNLOADING MODULATOR from Arabidopsis thaliana (Mouse-ear cress).